We begin with the raw amino-acid sequence, 197 residues long: Lipid A acyltransferase PagP (197 aa).

The first 24 residues, methionine 1–alanine 24, serve as a signal peptide directing secretion. Active-site residues include histidine 69, aspartate 112, and serine 113.

It belongs to the lipid A palmitoyltransferase family. As to quaternary structure, homodimer.

It localises to the cell outer membrane. The catalysed reaction is a lipid A + a 1,2-diacyl-sn-glycero-3-phosphocholine = a hepta-acyl lipid A + a 2-acyl-sn-glycero-3-phosphocholine. It catalyses the reaction a lipid IVA + a 1,2-diacyl-sn-glycero-3-phosphocholine = a lipid IVB + a 2-acyl-sn-glycero-3-phosphocholine. It carries out the reaction a lipid IIA + a 1,2-diacyl-sn-glycero-3-phosphocholine = a lipid IIB + a 2-acyl-sn-glycero-3-phosphocholine. In terms of biological role, transfers a fatty acid residue from the sn-1 position of a phospholipid to the N-linked hydroxyfatty acid chain on the proximal unit of lipid A or its precursors. The polypeptide is Lipid A acyltransferase PagP (Serratia proteamaculans (strain 568)).